We begin with the raw amino-acid sequence, 265 residues long: uncharacterized protein (265 aa).

This is an uncharacterized protein from Autographa californica nuclear polyhedrosis virus (AcMNPV).